The chain runs to 116 residues: Host transcription reprogramming factor 4 (116 aa).

The signal sequence occupies residues Met1 to Gly24. The interval Gly24–Arg53 is disordered. Residues Val33–Pro47 show a composition bias toward polar residues. Residues Phe74–Phe96 form a C2H2-type; degenerate zinc finger.

The protein resides in the secreted. Its subcellular location is the host nucleus. Probable secreted effector that translocates into the nuclei of host cells to reprogram the expression of targeted genes by binding on effector binding elements in rice. In Pyricularia oryzae (strain 70-15 / ATCC MYA-4617 / FGSC 8958) (Rice blast fungus), this protein is Host transcription reprogramming factor 4.